Reading from the N-terminus, the 914-residue chain is TRPM8 channel-associated factor 2 (914 aa).

In terms of domain architecture, Peptidase M60 spans 541 to 840 (DAWMSTGLNL…TYLQLQEAFG (300 aa)).

It belongs to the TCAF family. Interacts with TRPM8 (via N-terminus and C-terminus domains); the interaction inhibits TRPM8 channel activity. Interacts with TRPV6.

Its subcellular location is the cell membrane. Functionally, negatively regulates the plasma membrane cation channel TRPM8 activity. Involved in the recruitment of TRPM8 to the cell surface. Promotes prostate cancer cell migration stimulation in a TRPM8-dependent manner. The chain is TRPM8 channel-associated factor 2 from Bos taurus (Bovine).